The sequence spans 1068 residues: Carbamoyl phosphate synthase large chain (1068 aa).

Residues 1–401 are carboxyphosphate synthetic domain; the sequence is MPLNKDIKKV…AFLKGTRSLE (401 aa). 12 residues coordinate ATP: Arg-129, Arg-169, Gly-175, Gly-176, Lys-208, Val-210, Glu-215, Gly-241, Ile-242, His-243, Gln-284, and Glu-298. An ATP-grasp 1 domain is found at 133 to 327; it reads RNVMSRINEP…IAKVASKIAL (195 aa). The Mg(2+) site is built by Gln-284, Glu-298, and Asn-300. Positions 284, 298, and 300 each coordinate Mn(2+). The segment at 402 to 549 is oligomerization domain; the sequence is IGKYSLEHKK…YSTYDVYDEV (148 aa). A carbamoyl phosphate synthetic domain region spans residues 550–932; the sequence is EVSKNKKVIV…ALYKGFIGAN (383 aa). Residues 674–864 form the ATP-grasp 2 domain; that stretch reads DELLEKLKIA…IVDIATRVML (191 aa). 10 residues coordinate ATP: Arg-710, Lys-749, Leu-751, Glu-755, Gly-780, Val-781, His-782, Ser-783, Gln-823, and Glu-835. Mg(2+)-binding residues include Gln-823, Glu-835, and Asn-837. The Mn(2+) site is built by Gln-823, Glu-835, and Asn-837. The MGS-like domain occupies 933–1068; sequence ISIKKEKGTV…ETLYIFDLSN (136 aa). The tract at residues 933-1068 is allosteric domain; the sequence is ISIKKEKGTV…ETLYIFDLSN (136 aa).

The protein belongs to the CarB family. In terms of assembly, composed of two chains; the small (or glutamine) chain promotes the hydrolysis of glutamine to ammonia, which is used by the large (or ammonia) chain to synthesize carbamoyl phosphate. Tetramer of heterodimers (alpha,beta)4. Requires Mg(2+) as cofactor. The cofactor is Mn(2+).

The catalysed reaction is hydrogencarbonate + L-glutamine + 2 ATP + H2O = carbamoyl phosphate + L-glutamate + 2 ADP + phosphate + 2 H(+). The enzyme catalyses hydrogencarbonate + NH4(+) + 2 ATP = carbamoyl phosphate + 2 ADP + phosphate + 2 H(+). Its pathway is amino-acid biosynthesis; L-arginine biosynthesis; carbamoyl phosphate from bicarbonate: step 1/1. It functions in the pathway pyrimidine metabolism; UMP biosynthesis via de novo pathway; (S)-dihydroorotate from bicarbonate: step 1/3. Its function is as follows. Large subunit of the glutamine-dependent carbamoyl phosphate synthetase (CPSase). CPSase catalyzes the formation of carbamoyl phosphate from the ammonia moiety of glutamine, carbonate, and phosphate donated by ATP, constituting the first step of 2 biosynthetic pathways, one leading to arginine and/or urea and the other to pyrimidine nucleotides. The large subunit (synthetase) binds the substrates ammonia (free or transferred from glutamine from the small subunit), hydrogencarbonate and ATP and carries out an ATP-coupled ligase reaction, activating hydrogencarbonate by forming carboxy phosphate which reacts with ammonia to form carbamoyl phosphate. The polypeptide is Carbamoyl phosphate synthase large chain (Clostridium botulinum (strain Langeland / NCTC 10281 / Type F)).